A 430-amino-acid polypeptide reads, in one-letter code: 3-phosphoshikimate 1-carboxyvinyltransferase (430 aa).

3-phosphoshikimate is bound by residues K23, S24, and R28. K23 provides a ligand contact to phosphoenolpyruvate. Phosphoenolpyruvate contacts are provided by G93 and R121. Residues S166, Q168, D313, and K340 each contribute to the 3-phosphoshikimate site. Q168 serves as a coordination point for phosphoenolpyruvate. D313 serves as the catalytic Proton acceptor. Phosphoenolpyruvate-binding residues include R344 and R386.

This sequence belongs to the EPSP synthase family. In terms of assembly, monomer.

Its subcellular location is the cytoplasm. It carries out the reaction 3-phosphoshikimate + phosphoenolpyruvate = 5-O-(1-carboxyvinyl)-3-phosphoshikimate + phosphate. Its pathway is metabolic intermediate biosynthesis; chorismate biosynthesis; chorismate from D-erythrose 4-phosphate and phosphoenolpyruvate: step 6/7. Catalyzes the transfer of the enolpyruvyl moiety of phosphoenolpyruvate (PEP) to the 5-hydroxyl of shikimate-3-phosphate (S3P) to produce enolpyruvyl shikimate-3-phosphate and inorganic phosphate. The polypeptide is 3-phosphoshikimate 1-carboxyvinyltransferase (Anaeromyxobacter sp. (strain Fw109-5)).